We begin with the raw amino-acid sequence, 446 residues long: Probable D-serine dehydratase (446 aa).

At Lys-116 the chain carries N6-(pyridoxal phosphate)lysine.

It belongs to the serine/threonine dehydratase family. DsdA subfamily. Pyridoxal 5'-phosphate is required as a cofactor.

It catalyses the reaction D-serine = pyruvate + NH4(+). The protein is Probable D-serine dehydratase of Bacillus cereus (strain ZK / E33L).